A 144-amino-acid chain; its full sequence is Large ribosomal subunit protein uL13 (144 aa).

The protein belongs to the universal ribosomal protein uL13 family. As to quaternary structure, part of the 50S ribosomal subunit.

Functionally, this protein is one of the early assembly proteins of the 50S ribosomal subunit, although it is not seen to bind rRNA by itself. It is important during the early stages of 50S assembly. The polypeptide is Large ribosomal subunit protein uL13 (Nitratidesulfovibrio vulgaris (strain ATCC 29579 / DSM 644 / CCUG 34227 / NCIMB 8303 / VKM B-1760 / Hildenborough) (Desulfovibrio vulgaris)).